The following is a 369-amino-acid chain: Anhydro-N-acetylmuramic acid kinase (369 aa).

12–19 (GTSMDGVD) serves as a coordination point for ATP.

It belongs to the anhydro-N-acetylmuramic acid kinase family.

It carries out the reaction 1,6-anhydro-N-acetyl-beta-muramate + ATP + H2O = N-acetyl-D-muramate 6-phosphate + ADP + H(+). It functions in the pathway amino-sugar metabolism; 1,6-anhydro-N-acetylmuramate degradation. It participates in cell wall biogenesis; peptidoglycan recycling. Functionally, catalyzes the specific phosphorylation of 1,6-anhydro-N-acetylmuramic acid (anhMurNAc) with the simultaneous cleavage of the 1,6-anhydro ring, generating MurNAc-6-P. Is required for the utilization of anhMurNAc either imported from the medium or derived from its own cell wall murein, and thus plays a role in cell wall recycling. This is Anhydro-N-acetylmuramic acid kinase from Shewanella oneidensis (strain ATCC 700550 / JCM 31522 / CIP 106686 / LMG 19005 / NCIMB 14063 / MR-1).